The sequence spans 101 residues: Small ribosomal subunit protein uS14 (101 aa).

The protein belongs to the universal ribosomal protein uS14 family. Part of the 30S ribosomal subunit. Contacts proteins S3 and S10.

Its function is as follows. Binds 16S rRNA, required for the assembly of 30S particles and may also be responsible for determining the conformation of the 16S rRNA at the A site. This chain is Small ribosomal subunit protein uS14, found in Pseudomonas aeruginosa (strain LESB58).